The sequence spans 211 residues: ATP phosphoribosyltransferase (211 aa).

This sequence belongs to the ATP phosphoribosyltransferase family. Short subfamily. In terms of assembly, heteromultimer composed of HisG and HisZ subunits.

It localises to the cytoplasm. The enzyme catalyses 1-(5-phospho-beta-D-ribosyl)-ATP + diphosphate = 5-phospho-alpha-D-ribose 1-diphosphate + ATP. Its pathway is amino-acid biosynthesis; L-histidine biosynthesis; L-histidine from 5-phospho-alpha-D-ribose 1-diphosphate: step 1/9. Its function is as follows. Catalyzes the condensation of ATP and 5-phosphoribose 1-diphosphate to form N'-(5'-phosphoribosyl)-ATP (PR-ATP). Has a crucial role in the pathway because the rate of histidine biosynthesis seems to be controlled primarily by regulation of HisG enzymatic activity. The sequence is that of ATP phosphoribosyltransferase from Lacticaseibacillus paracasei (strain ATCC 334 / BCRC 17002 / CCUG 31169 / CIP 107868 / KCTC 3260 / NRRL B-441) (Lactobacillus paracasei).